We begin with the raw amino-acid sequence, 790 residues long: MAQVLNDISNRVLPLFPIRNTVLFPGLVLPILIGRDDSVKNLLRLGNDSENQHTILLTTQKNADDIKPSINSLYKIGVLAKITELVQLPNDNYKILIKVLDRVKLTIRRSHDLLVAEYVIVPDDEINNADEIKDKLANAIVLFNKYIRLSKKINPDLLVHVLSYTNQSYVVNALAANLICNVANKQSLLEITDVKQRIERLTDHVAKEIIIMETDELITSKAQKNLEKMQRDCFLNEKMKIIKNVLGVDDEKSDIAELQKKIDTLHLSKEAKAKAESELKKLKMMNPISAEAALTRNYLDILLGLPWKKEKESKININIDKALQDLNADHHGLEKVKERITEYLAVLQRTKKSIGTILCFIGPPGVGKTSLVKSIAEATKCKYAKFALGGVRDEAEIRGHRKTYIGAMPGKIISLIKRENSNNLVILLDEIDKISRDSRGDPAFALLEVLDPEQNSRFQDNYLEVEYDLSKVLFIATANSFNFPIPLRDRMEIIQIPGYVEGEKLEIAKHHLIPKQIKNNGLKNTEISFSDEAILELIRYYTREAGVRGLERKIGGICRKVLKKILSSKDIKSESVSKENIKDYLGSRKYKYGLAEDDNQVGITIGLAYTETGGDLIWVEAVMIPGKGKVKATGKLGDVMKESSQTAFSYFCSRAQKYNVKYEQYHKYDIHIHFPEGAIPKDGPSAGIAIFTTIVSLMTGIPVKLSVAMTGEITLRGRILPIGGLKEKLMAAKRGGIKTVIIPEGNTSDLEDIPNSIKNDLDIIPLSEADQVLDIALATTVTNSPAETAC.

One can recognise a Lon N-terminal domain in the interval 13 to 209 (LPLFPIRNTV…RLTDHVAKEI (197 aa)). 362–369 (GPPGVGKT) contributes to the ATP binding site. Residues 598-779 (DNQVGITIGL…DQVLDIALAT (182 aa)) enclose the Lon proteolytic domain. Catalysis depends on residues Ser685 and Lys728.

Belongs to the peptidase S16 family. As to quaternary structure, homohexamer. Organized in a ring with a central cavity.

Its subcellular location is the cytoplasm. The catalysed reaction is Hydrolysis of proteins in presence of ATP.. In terms of biological role, ATP-dependent serine protease that mediates the selective degradation of mutant and abnormal proteins as well as certain short-lived regulatory proteins. Required for cellular homeostasis and for survival from DNA damage and developmental changes induced by stress. Degrades polypeptides processively to yield small peptide fragments that are 5 to 10 amino acids long. Binds to DNA in a double-stranded, site-specific manner. The polypeptide is Lon protease (Orientia tsutsugamushi (strain Ikeda) (Rickettsia tsutsugamushi)).